We begin with the raw amino-acid sequence, 231 residues long: Hypoxanthine-guanine-xanthine phosphoribosyltransferase (231 aa).

Residues lysine 77, 144-152, lysine 176, and aspartate 204 each bind GMP; that span reads EDIIDTGKT. Catalysis depends on aspartate 148, which acts as the Proton acceptor. Aspartate 204 is a binding site for Mg(2+).

It belongs to the purine/pyrimidine phosphoribosyltransferase family. Homotetramer. Mg(2+) is required as a cofactor.

The protein localises to the cytoplasm. It catalyses the reaction IMP + diphosphate = hypoxanthine + 5-phospho-alpha-D-ribose 1-diphosphate. The catalysed reaction is GMP + diphosphate = guanine + 5-phospho-alpha-D-ribose 1-diphosphate. The enzyme catalyses XMP + diphosphate = xanthine + 5-phospho-alpha-D-ribose 1-diphosphate. It participates in purine metabolism; GMP biosynthesis via salvage pathway; GMP from guanine: step 1/1. The protein operates within purine metabolism; IMP biosynthesis via salvage pathway; IMP from hypoxanthine: step 1/1. Its pathway is purine metabolism; XMP biosynthesis via salvage pathway; XMP from xanthine: step 1/1. Catalyzes the transfer of a ribosyl phosphate group from 5-phosphoribose 1-diphosphate to the N(9) of hypoxanthine, guanine or xanthine, leading to IMP, GMP and XMP, respectively. Plays a central role in the generation of purine nucleotides through the purine salvage pathway. The chain is Hypoxanthine-guanine-xanthine phosphoribosyltransferase (LACZ) from Plasmodium falciparum (isolate K1 / Thailand).